Reading from the N-terminus, the 454-residue chain is UDP-N-acetylmuramoylalanine--D-glutamate ligase (454 aa).

Residue 114–120 (GTNGKTT) coordinates ATP.

It belongs to the MurCDEF family.

It is found in the cytoplasm. The catalysed reaction is UDP-N-acetyl-alpha-D-muramoyl-L-alanine + D-glutamate + ATP = UDP-N-acetyl-alpha-D-muramoyl-L-alanyl-D-glutamate + ADP + phosphate + H(+). It functions in the pathway cell wall biogenesis; peptidoglycan biosynthesis. Its function is as follows. Cell wall formation. Catalyzes the addition of glutamate to the nucleotide precursor UDP-N-acetylmuramoyl-L-alanine (UMA). The protein is UDP-N-acetylmuramoylalanine--D-glutamate ligase of Desulfitobacterium hafniense (strain DSM 10664 / DCB-2).